Reading from the N-terminus, the 154-residue chain is Jupiter microtubule associated homolog 1 (154 aa).

Methionine 1 carries the post-translational modification N-acetylmethionine. Positions 1 to 19 (MTTTTTFKGVDPNSRNSSR) are enriched in polar residues. The disordered stretch occupies residues 1-154 (MTTTTTFKGV…PGGKSSLVLG (154 aa)). The residue at position 2 (threonine 2) is an N-acetylthreonine; in Hematological and neurological expressed 1 protein, N-terminally processed. Phosphoserine occurs at positions 28 and 31. Residues 47 to 59 (MASNIFGTPEENQ) show a composition bias toward polar residues. Threonine 54 is modified (phosphothreonine). Residues 60–71 (ASWAKSAGAKSS) show a composition bias toward low complexity. Residues serine 71, serine 80, serine 87, serine 88, and serine 92 each carry the phosphoserine modification. Over residues 80–91 (SGLQRRNSSEAS) the composition is skewed to polar residues. Positions 96-108 (LDLKGEGDIHENV) are enriched in basic and acidic residues. Over residues 125-138 (PAAPVPSPVAPAPV) the composition is skewed to pro residues. The residue at position 131 (serine 131) is a Phosphoserine. The residue at position 148 (lysine 148) is an N6-acetyllysine.

It belongs to the JUPITER family. In terms of assembly, interacts with the complex composed, at least, of APC, CTNNB1 and GSK3B; the interaction takes place with the inactive form of GSK3B (phosphorylated at 'Ser-9'). Expressed in testis, skeletal muscle, thymus, prostate, colon, peripheral blood cells, brain and placenta.

The protein localises to the nucleus. The protein resides in the cytoplasm. Modulates negatively AKT-mediated GSK3B signaling. Induces CTNNB1 'Ser-33' phosphorylation and degradation through the suppression of the inhibitory 'Ser-9' phosphorylation of GSK3B, which represses the function of the APC:CTNNB1:GSK3B complex and the interaction with CDH1/E-cadherin in adherent junctions. Plays a role in the regulation of cell cycle and cell adhesion. Has an inhibitory role on AR-signaling pathway through the induction of receptor proteasomal degradation. The protein is Jupiter microtubule associated homolog 1 of Homo sapiens (Human).